The sequence spans 475 residues: UDP-N-acetylmuramate--L-alanine ligase (475 aa).

ATP is bound at residue 114–120; sequence GTHGKTT.

Belongs to the MurCDEF family.

Its subcellular location is the cytoplasm. The catalysed reaction is UDP-N-acetyl-alpha-D-muramate + L-alanine + ATP = UDP-N-acetyl-alpha-D-muramoyl-L-alanine + ADP + phosphate + H(+). It participates in cell wall biogenesis; peptidoglycan biosynthesis. Its function is as follows. Cell wall formation. The sequence is that of UDP-N-acetylmuramate--L-alanine ligase from Bartonella quintana (strain Toulouse) (Rochalimaea quintana).